Here is a 417-residue protein sequence, read N- to C-terminus: Carboxypeptidase B (417 aa).

The first 16 residues, 1 to 16, serve as a signal peptide directing secretion; the sequence is MLAFLILVTVTLASAH. A propeptide spans 17 to 110 (activation peptide); sequence HSGEHFEGDK…LEAQFDSRVR (94 aa). The region spanning 118 to 412 is the Peptidase M14 domain; that stretch reads KYNNWETIEA…LAIKYVTSYV (295 aa). A disulfide bridge connects residues C173 and C186. H176 and E179 together coordinate Zn(2+). Substrate contacts are provided by residues 176–179, R234, and 251–252; these read HARE and NR. 2 cysteine pairs are disulfide-bonded: C245/C268 and C259/C273. Residue H304 coordinates Zn(2+). Residues 305-306 and Y356 contribute to the substrate site; that span reads SY. Residue E378 is the Proton donor/acceptor of the active site.

The protein belongs to the peptidase M14 family. Zn(2+) serves as cofactor.

It localises to the secreted. The protein localises to the zymogen granule lumen. It catalyses the reaction Preferential release of a C-terminal lysine or arginine amino acid.. The protein is Carboxypeptidase B (CPB1) of Bos taurus (Bovine).